The chain runs to 740 residues: MAAFSEMGVMPEIAQAVEEMDWLLPTDIQAESIPLILGGGDVLMAAETGSGKTGAFSIPVIQIVYETLKDQMEGKKGKATIKTGGAVLNKWQMNPYDRGSAFAIGSDGLCCQSREVKEWHGCRATRGVTKGKYYYEVSCHDQGLCRVGWSTMQASLDLGTDKFGFGFGGTGKKSHNKQFDSYGEEFTMHDTIGCYLDIDKGQIKFSKNGKDLGLAFEFPPHIRNQALFAACVLKNAELKFNFGEEDFKFPPKDGYIGLCKAPDGNVVKSQHTGNAQVVQTQNLPNAPKALIVEPSRELAEQTLNNVKQFKKYIDNPKLRELLIIGGVAARDQLSVLEQGVDIVVGTPGRLDDLVSTGKLNLSQVRFLVLDEADGLLLQGYSDFINRIHSQIPQITSDGKRLQVIVCSATLHSFDVKKLSEKIMHFPTWVDLKGEDSVPETVHHVVVIVNPKTDKLWERLGKNHIRTDEVHAKDNTLPGANTPEMWSEAIKILKGEYTVRAIKEHKMDQAIIFCRTKIDCDNMEQYFIQQGGGPDRKGHQFSCVCLHGDRKPQERKQNLERFKRGDVRFLICTDVAARGIDIHGVPYVINVTLPDEKQNYVHRIGRVGRAERMGLAISLVAKEKEKVWYHVCSSRGKGCYNTRLKEEGGCTIWYNEMQLLGEIEEHLNCTISQVEPDIKVPVDDFDGKVTYGQKRALGGGLYKGHVDILAPTVQELAALEKEAQTSFLHLGYLPNQLFRTF.

The segment at Met1 to Val448 is interaction with dsRNA. Residues Ala2 to Trp428 enclose the Helicase ATP-binding domain. ATP is bound at residue Ala46 to Thr53. The B30.2/SPRY domain maps to Asp70–Phe247. Positions Asp370–Asp373 match the DEAD box motif. Positions Lys493–Val681 constitute a Helicase C-terminal domain.

Belongs to the DEAD box helicase family. DDX1 subfamily. In terms of tissue distribution, detected in embryonic retina, brain, heart and liver (at protein level). Detected in embryonic retina, brain, heart, kidney and liver.

It localises to the nucleus. It is found in the cytoplasm. The protein resides in the cytoplasmic granule. Its subcellular location is the cytosol. The protein localises to the mitochondrion. It carries out the reaction ATP + H2O = ADP + phosphate + H(+). In terms of biological role, acts as an ATP-dependent RNA helicase, able to unwind both RNA-RNA and RNA-DNA duplexes. Possesses 5' single-stranded RNA overhang nuclease activity. Acts as a positive regulator of transcription. May be involved in 3'-end cleavage and polyadenylation of pre-mRNAs. Binds DNA and RNA. Component of the tRNA-splicing ligase complex required to facilitate the enzymatic turnover of catalytic subunit RTCB. Binds (via helicase ATP-binding domain) on both short and long poly(I:C) dsRNA. This chain is ATP-dependent RNA helicase DDX1 (DDX1), found in Gallus gallus (Chicken).